Reading from the N-terminus, the 486-residue chain is N-succinylglutamate 5-semialdehyde dehydrogenase (486 aa).

Glycine 220–glycine 225 is an NAD(+) binding site. Catalysis depends on residues glutamate 243 and cysteine 277.

Belongs to the aldehyde dehydrogenase family. AstD subfamily.

It carries out the reaction N-succinyl-L-glutamate 5-semialdehyde + NAD(+) + H2O = N-succinyl-L-glutamate + NADH + 2 H(+). It participates in amino-acid degradation; L-arginine degradation via AST pathway; L-glutamate and succinate from L-arginine: step 4/5. Catalyzes the NAD-dependent reduction of succinylglutamate semialdehyde into succinylglutamate. The polypeptide is N-succinylglutamate 5-semialdehyde dehydrogenase (Shewanella baltica (strain OS185)).